Consider the following 485-residue polypeptide: Glutamate--tRNA ligase (485 aa).

The 'HIGH' region signature appears at 11–21 (PSPTGHLHIGN). The 'KMSKS' region signature appears at 252–256 (KLSKR). K255 is a binding site for ATP.

Belongs to the class-I aminoacyl-tRNA synthetase family. Glutamate--tRNA ligase type 1 subfamily. Monomer.

It localises to the cytoplasm. It carries out the reaction tRNA(Glu) + L-glutamate + ATP = L-glutamyl-tRNA(Glu) + AMP + diphosphate. Functionally, catalyzes the attachment of glutamate to tRNA(Glu) in a two-step reaction: glutamate is first activated by ATP to form Glu-AMP and then transferred to the acceptor end of tRNA(Glu). This Bacillus cytotoxicus (strain DSM 22905 / CIP 110041 / 391-98 / NVH 391-98) protein is Glutamate--tRNA ligase.